The chain runs to 69 residues: Cytochrome c oxidase subunit 8A, mitochondrial (69 aa).

The N-terminal 25 residues, methionine 1–lysine 25, are a transit peptide targeting the mitochondrion. The SIFI-degron signature appears at serine 2–leucine 19. The Mitochondrial matrix portion of the chain corresponds to valine 26–glycine 36. The chain crosses the membrane as a helical span at residues threonine 37–serine 60. Topologically, residues histidine 61–glutamate 69 are mitochondrial intermembrane.

This sequence belongs to the cytochrome c oxidase VIII family. As to quaternary structure, component of the cytochrome c oxidase (complex IV, CIV), a multisubunit enzyme composed of 14 subunits. The complex is composed of a catalytic core of 3 subunits MT-CO1, MT-CO2 and MT-CO3, encoded in the mitochondrial DNA, and 11 supernumerary subunits COX4I, COX5A, COX5B, COX6A, COX6B, COX6C, COX7A, COX7B, COX7C, COX8 and NDUFA4, which are encoded in the nuclear genome. The complex exists as a monomer or a dimer and forms supercomplexes (SCs) in the inner mitochondrial membrane with NADH-ubiquinone oxidoreductase (complex I, CI) and ubiquinol-cytochrome c oxidoreductase (cytochrome b-c1 complex, complex III, CIII), resulting in different assemblies (supercomplex SCI(1)III(2)IV(1) and megacomplex MCI(2)III(2)IV(2)). In response to mitochondrial stress, the precursor protein is ubiquitinated by the SIFI complex in the cytoplasm before mitochondrial import, leading to its degradation. Within the SIFI complex, UBR4 initiates ubiquitin chain that are further elongated or branched by KCMF1.

It localises to the mitochondrion inner membrane. The protein operates within energy metabolism; oxidative phosphorylation. In terms of biological role, component of the cytochrome c oxidase, the last enzyme in the mitochondrial electron transport chain which drives oxidative phosphorylation. The respiratory chain contains 3 multisubunit complexes succinate dehydrogenase (complex II, CII), ubiquinol-cytochrome c oxidoreductase (cytochrome b-c1 complex, complex III, CIII) and cytochrome c oxidase (complex IV, CIV), that cooperate to transfer electrons derived from NADH and succinate to molecular oxygen, creating an electrochemical gradient over the inner membrane that drives transmembrane transport and the ATP synthase. Cytochrome c oxidase is the component of the respiratory chain that catalyzes the reduction of oxygen to water. Electrons originating from reduced cytochrome c in the intermembrane space (IMS) are transferred via the dinuclear copper A center (CU(A)) of subunit 2 and heme A of subunit 1 to the active site in subunit 1, a binuclear center (BNC) formed by heme A3 and copper B (CU(B)). The BNC reduces molecular oxygen to 2 water molecules using 4 electrons from cytochrome c in the IMS and 4 protons from the mitochondrial matrix. This is Cytochrome c oxidase subunit 8A, mitochondrial (COX8A) from Papio anubis (Olive baboon).